Reading from the N-terminus, the 462-residue chain is Sensor histidine kinase RegB (462 aa).

Topologically, residues M1–L25 are cytoplasmic. Residues L26 to L45 traverse the membrane as a helical segment. Over G46–M51 the chain is Extracellular. The chain crosses the membrane as a helical span at residues G52–F70. Topologically, residues V71–L78 are cytoplasmic. A helical transmembrane segment spans residues T79 to F96. Residues L97–G103 are Extracellular-facing. A helical transmembrane segment spans residues L104 to L123. Topologically, residues E124 to V129 are cytoplasmic. The helical transmembrane segment at I130 to L149 threads the bilayer. The Extracellular segment spans residues I150–E164. A helical membrane pass occupies residues F165–S182. Topologically, residues R183 to T462 are cytoplasmic. The region spanning A218–R445 is the Histidine kinase domain. At H221 the chain carries Phosphohistidine; by autocatalysis.

It is found in the cell inner membrane. It carries out the reaction ATP + protein L-histidine = ADP + protein N-phospho-L-histidine.. In terms of biological role, member of the two-component regulatory system RegB/RegA. Involved in the positive regulation of photosynthesis gene expression in response to anaerobiosis. Also involved in positive regulation of the cbbI and cbbII Calvin cycle CO2 fixation operons, as well as in regulation of expression of genes involved in alternative CO2 fixation pathways. Phosphorylates RegA/PrrA. This chain is Sensor histidine kinase RegB (regB), found in Cereibacter sphaeroides (strain ATCC 17023 / DSM 158 / JCM 6121 / CCUG 31486 / LMG 2827 / NBRC 12203 / NCIMB 8253 / ATH 2.4.1.) (Rhodobacter sphaeroides).